The following is a 470-amino-acid chain: Putative multidrug resistance protein MdtD (470 aa).

Topologically, residues 1-11 (MTEFPDNTRWQ) are periplasmic. Residues 12 to 32 (LWIVAFGFFMQSLDTTIVNTA) form a helical membrane-spanning segment. The Cytoplasmic portion of the chain corresponds to 33–48 (LPSMAKSLGESPLHMH). The chain crosses the membrane as a helical span at residues 49 to 69 (MVVVSYVLTVAVMLPASGWLA). Over 70–76 (DKIGVRN) the chain is Periplasmic. Residues 77–97 (IFFAAIVLFTLGSLFCALSGT) traverse the membrane as a helical segment. Topologically, residues 98–101 (LNQL) are cytoplasmic. A helical transmembrane segment spans residues 102–124 (VLARVLQGVGGAMMVPVGRLTVM). The Periplasmic segment spans residues 125–137 (KIVPRAQYMAAMT). Residues 138-158 (FVALPGQIGPLLGPALGGVLV) form a helical membrane-spanning segment. Topologically, residues 159–164 (EYASWH) are cytoplasmic. A helical membrane pass occupies residues 165–185 (WIFLINIPVGIVGAMATFMLM). Residues 186–196 (PNYTIETRRFD) lie on the Periplasmic side of the membrane. Residues 197-217 (LPGFLLLAIGMAVLTLALDGS) form a helical membrane-spanning segment. Over 218–224 (KSMGISP) the chain is Cytoplasmic. A helical membrane pass occupies residues 225-245 (WTLAGLAAGGAAAILLYLFHA). Over 246 to 262 (KKNSGALFSLRLFRTPT) the chain is Periplasmic. A helical membrane pass occupies residues 263–283 (FSLGLLGSFAGRIGSGMLPFM). Residues 284 to 285 (TP) lie on the Cytoplasmic side of the membrane. Residues 286-306 (VFLQIGLGFSPFHAGLMMIPM) form a helical membrane-spanning segment. The Periplasmic portion of the chain corresponds to 307–341 (VLGSMGMKRIVVQIVNRFGYRRVLVATTLGLALVS). Residues 342 to 362 (LLFMSVALLGWYYLLPLVLLL) form a helical membrane-spanning segment. The Cytoplasmic segment spans residues 363–395 (QGMVNSARFSSMNTLTLKDLPDTLASSGNSLLS). The helical transmembrane segment at 396 to 416 (MIMQLSMSIGVTIAGMLLGMF) threads the bilayer. Residues 417 to 430 (GQQHIGIDSSATHH) are Periplasmic-facing. Residues 431–451 (VFMYTWLCMAVIIALPAIIFA) traverse the membrane as a helical segment. Over 452 to 470 (RVPNDTQQNMVISRRKRSL) the chain is Cytoplasmic.

The protein belongs to the major facilitator superfamily. TCR/Tet family.

It localises to the cell inner membrane. This is Putative multidrug resistance protein MdtD from Salmonella typhi.